A 256-amino-acid chain; its full sequence is Major prion protein 2 (256 aa).

The signal sequence occupies residues 1–24; it reads MVKSHIGSWILVLFVAMWSDVALC. Residues 25 to 233 form an interaction with GRB2, ERI3 and SYN1 region; sequence KKRPKPGGGW…ESEAYYQRGA (209 aa). The interval 28 to 110 is disordered; sequence PKPGGGWNTG…QWNKPSKPKT (83 aa). 5 repeat units span residues 54–62, 63–70, 71–78, 79–86, and 87–95. Residues 54–95 are 5 X 8 AA tandem repeats of P-H-G-G-G-W-G-Q; the sequence is PQEGGDWGQPHGGGWGQPHVGGWGQPHGGGWGQPHGGGGWGQ. Residues 58 to 99 are compositionally biased toward gly residues; sequence GDWGQPHGGGWGQPHVGGWGQPHGGGWGQPHGGGGWGQGGTH. Cu(2+) contacts are provided by His64, Gly65, Gly66, His72, Gly74, His80, Gly81, Gly82, His88, Gly90, and Gly91. Residues Cys182 and Cys217 are joined by a disulfide bond. N-linked (GlcNAc...) asparagine glycans are attached at residues Asn184 and Asn200. Ala233 carries the GPI-anchor amidated alanine lipid modification. A propeptide spans 234-256 (removed in mature form); it reads SVILFSSPPVILLISFLIFLIVG.

This sequence belongs to the prion family. Monomer and homodimer. Has a tendency to aggregate into amyloid fibrils containing a cross-beta spine, formed by a steric zipper of superposed beta-strands. Soluble oligomers may represent an intermediate stage on the path to fibril formation. Copper binding may promote oligomerization. Interacts with GRB2, APP, ERI3/PRNPIP and SYN1. Mislocalized cytosolically exposed PrP interacts with MGRN1; this interaction alters MGRN1 subcellular location and causes lysosomal enlargement. Interacts with KIAA1191.

The protein resides in the cell membrane. Its subcellular location is the golgi apparatus. Its primary physiological function is unclear. Has cytoprotective activity against internal or environmental stresses. May play a role in neuronal development and synaptic plasticity. May be required for neuronal myelin sheath maintenance. May play a role in iron uptake and iron homeostasis. Soluble oligomers are toxic to cultured neuroblastoma cells and induce apoptosis (in vitro). Association with GPC1 (via its heparan sulfate chains) targets PRNP to lipid rafts. Also provides Cu(2+) or Zn(2+) for the ascorbate-mediated GPC1 deaminase degradation of its heparan sulfate side chains. The chain is Major prion protein 2 from Tragelaphus strepsiceros (Greater kudu).